The primary structure comprises 160 residues: Major pollen allergen Car b 1 isoforms 1A and 1B (160 aa).

It belongs to the BetVI family.

In Carpinus betulus (European hornbeam), this protein is Major pollen allergen Car b 1 isoforms 1A and 1B.